The sequence spans 190 residues: Superoxide dismutase [Fe] (190 aa).

Positions 27, 75, 156, and 160 each coordinate Fe cation.

Belongs to the iron/manganese superoxide dismutase family. Homodimer. Requires Fe cation as cofactor.

It carries out the reaction 2 superoxide + 2 H(+) = H2O2 + O2. Functionally, destroys superoxide anion radicals which are normally produced within the cells and which are toxic to biological systems. The sequence is that of Superoxide dismutase [Fe] (SODB) from Entamoeba histolytica (strain ATCC 30459 / HM-1:IMSS / ABRM).